The sequence spans 372 residues: Protein Wnt-1 (372 aa).

Positions 1 to 29 are cleaved as a signal peptide; the sequence is MLKSTQVILIFILLISIVESLSWLALGLA. 3 disulfide bridges follow: C77–C88, C130–C138, and C140–C158. The N-linked (GlcNAc...) asparagine glycan is linked to N87. A glycan (N-linked (GlcNAc...) asparagine) is linked at N187. Intrachain disulfides connect C225–C239, C227–C234, C301–C332, C317–C327, C331–C371, C347–C362, C349–C359, and C354–C355. S231 carries the O-palmitoleoyl serine; by mom-1 lipid modification.

The protein belongs to the Wnt family. Palmitoleoylation is required for efficient binding to frizzled receptors. Depalmitoleoylation leads to Wnt signaling pathway inhibition. As to expression, expressed in intestine, some head neurons and ventral nerve cord and pharyngeal neurons. Expressed in the tail and weakly expressed in the vulva and body wall muscles. Expressed highly in posterior dorsal and ventral muscle cells.

It localises to the secreted. It is found in the extracellular space. The protein resides in the extracellular matrix. Its subcellular location is the cytoplasm. The protein localises to the cell membrane. Its function is as follows. Ligand for members of the frizzled family of seven transmembrane receptors. Probable developmental protein. May be a signaling molecule which affects the development of discrete regions of tissues. Is likely to signal over only few cell diameters. Binds receptor tyrosine kinase cam-1. Together with Wnt ligand cwn-2, regulates the migration of CAN, ALM, BDU and HSN neurons during embryogenesis, the migration of QL and QR neuroblast descendants during larval development, and polarity of ALM neurons. Also acts with the Wnt ligand egl-20 to direct HSN neuron migration. Acts through the Wnt receptor cfz-2 to direct ALM migration. Also plays a role in axon growth and guidance in HSN and male CP neurons. In addition, together with Wnt ligand cwn-2, negatively regulates developmental neurite pruning of AIM neurons probably by acting as a ligand for receptor tyrosine kinase cam-1. Probably by activating the Wnt/Frizzled pathway, may regulate vulva development. May act redundantly with other Wnt ligands such as cwn-2 and mom-2 to control seam cell polarity. This chain is Protein Wnt-1 (cwn-1), found in Caenorhabditis elegans.